A 66-amino-acid polypeptide reads, in one-letter code: Beta-mammal toxin Co1 (66 aa).

The 66-residue stretch at 1–66 (KEGYLVNHST…VWPLPKKTCN (66 aa)) folds into the LCN-type CS-alpha/beta domain. Intrachain disulfides connect Cys-12–Cys-65, Cys-16–Cys-41, Cys-25–Cys-46, and Cys-29–Cys-48.

Expressed by the venom gland.

It localises to the secreted. Functionally, beta toxins bind voltage-independently at site-4 of sodium channels (Nav) and shift the voltage of activation toward more negative potentials thereby affecting sodium channel activation and promoting spontaneous and repetitive firing. This toxin acts on human Nav1.6/SCN8A voltage-gated sodium channels. In vivo, is lethal to mice 40 minutes after intraperitoneal injection at a dose of 5ug. No activity is observed when injected into crickets or woodlice. This chain is Beta-mammal toxin Co1, found in Centruroides ornatus (Scorpion).